The sequence spans 74 residues: Tetrahydromethanopterin S-methyltransferase subunit G (74 aa).

Residues 47–67 (VGIAYGLAIGFIFVYVLGTVL) traverse the membrane as a helical segment.

It belongs to the MtrG family. The complex is composed of 8 subunits; MtrA, MtrB, MtrC, MtrD, MtrE, MtrF, MtrG and MtrH.

The protein localises to the cell membrane. It carries out the reaction 5-methyl-5,6,7,8-tetrahydromethanopterin + coenzyme M + 2 Na(+)(in) = 5,6,7,8-tetrahydromethanopterin + methyl-coenzyme M + 2 Na(+)(out). It participates in one-carbon metabolism; methanogenesis from CO(2); methyl-coenzyme M from 5,10-methylene-5,6,7,8-tetrahydromethanopterin: step 2/2. Its function is as follows. Part of a complex that catalyzes the formation of methyl-coenzyme M and tetrahydromethanopterin from coenzyme M and methyl-tetrahydromethanopterin. This is an energy-conserving, sodium-ion translocating step. The polypeptide is Tetrahydromethanopterin S-methyltransferase subunit G (Methanococcus maripaludis (strain DSM 14266 / JCM 13030 / NBRC 101832 / S2 / LL)).